The chain runs to 162 residues: UPF0114 protein Pput_0713 (162 aa).

A run of 4 helical transmembrane segments spans residues L15–F35, L53–V73, V109–M126, and L136–L156.

This sequence belongs to the UPF0114 family.

Its subcellular location is the cell membrane. In Pseudomonas putida (strain ATCC 700007 / DSM 6899 / JCM 31910 / BCRC 17059 / LMG 24140 / F1), this protein is UPF0114 protein Pput_0713.